We begin with the raw amino-acid sequence, 241 residues long: tRNA pseudouridine synthase B (241 aa).

Aspartate 52 (nucleophile) is an active-site residue.

Belongs to the pseudouridine synthase TruB family. Type 1 subfamily.

It catalyses the reaction uridine(55) in tRNA = pseudouridine(55) in tRNA. Responsible for synthesis of pseudouridine from uracil-55 in the psi GC loop of transfer RNAs. In Chloroherpeton thalassium (strain ATCC 35110 / GB-78), this protein is tRNA pseudouridine synthase B.